Consider the following 75-residue polypeptide: Large ribosomal subunit protein bL31 (75 aa).

This sequence belongs to the bacterial ribosomal protein bL31 family. Type A subfamily. In terms of assembly, part of the 50S ribosomal subunit.

Functionally, binds the 23S rRNA. This is Large ribosomal subunit protein bL31 from Rhodopseudomonas palustris (strain BisB5).